A 286-amino-acid polypeptide reads, in one-letter code: Aldo-keto reductase MAV_4483 (286 aa).

Tyr61 functions as the Proton donor in the catalytic mechanism. NADPH-binding residues include Leu201, Val203, Val239, Arg241, Ser242, Arg247, and Asn251.

Belongs to the aldo/keto reductase family.

The polypeptide is Aldo-keto reductase MAV_4483 (Mycobacterium avium (strain 104)).